Here is a 155-residue protein sequence, read N- to C-terminus: UPF0461 protein C5orf24 homolog (155 aa).

Polar residues predominate over residues 60–69 (NETHLQTSTS). The interval 60 to 155 (NETHLQTSTS…QQALMCSSDA (96 aa)) is disordered. Basic residues predominate over residues 78-92 (LKKKKNVGRSGKRGR). Residues 94 to 107 (SGTTKSAGYRTSTG) are compositionally biased toward polar residues.

Belongs to the UPF0461 family.

This Xenopus laevis (African clawed frog) protein is UPF0461 protein C5orf24 homolog.